The sequence spans 460 residues: Glycogen synthase (460 aa).

Lys-15 is an ADP-alpha-D-glucose binding site.

It belongs to the glycosyltransferase 1 family. Bacterial/plant glycogen synthase subfamily.

The catalysed reaction is [(1-&gt;4)-alpha-D-glucosyl](n) + ADP-alpha-D-glucose = [(1-&gt;4)-alpha-D-glucosyl](n+1) + ADP + H(+). Its pathway is glycan biosynthesis; glycogen biosynthesis. Functionally, synthesizes alpha-1,4-glucan chains using ADP-glucose. In Trichodesmium erythraeum (strain IMS101), this protein is Glycogen synthase.